Here is a 455-residue protein sequence, read N- to C-terminus: Membrane-bound lytic murein transglycosylase F (455 aa).

The signal sequence occupies residues 1–21; that stretch reads MPKSAVSLFAILLLAASVITA. The tract at residues 22–264 is non-LT domain; that stretch reads CSPQTRPDAM…HIKEQHFGHV (243 aa). Residues 265–455 are LT domain; sequence KQFNYVTTSL…LKYLDEQGRL (191 aa). Glu309 is an active-site residue.

The protein in the N-terminal section; belongs to the bacterial solute-binding protein 3 family. It in the C-terminal section; belongs to the transglycosylase Slt family.

The protein localises to the cell outer membrane. It catalyses the reaction Exolytic cleavage of the (1-&gt;4)-beta-glycosidic linkage between N-acetylmuramic acid (MurNAc) and N-acetylglucosamine (GlcNAc) residues in peptidoglycan, from either the reducing or the non-reducing ends of the peptidoglycan chains, with concomitant formation of a 1,6-anhydrobond in the MurNAc residue.. Murein-degrading enzyme that degrades murein glycan strands and insoluble, high-molecular weight murein sacculi, with the concomitant formation of a 1,6-anhydromuramoyl product. Lytic transglycosylases (LTs) play an integral role in the metabolism of the peptidoglycan (PG) sacculus. Their lytic action creates space within the PG sacculus to allow for its expansion as well as for the insertion of various structures such as secretion systems and flagella. The chain is Membrane-bound lytic murein transglycosylase F from Idiomarina loihiensis (strain ATCC BAA-735 / DSM 15497 / L2-TR).